We begin with the raw amino-acid sequence, 213 residues long: Imidazole glycerol phosphate synthase subunit HisH (213 aa).

The Glutamine amidotransferase type-1 domain maps to 4 to 211 (NIGLIDYGMG…LAWLKKETKD (208 aa)). The active-site Nucleophile is the cysteine 82. Active-site residues include histidine 186 and glutamate 188.

As to quaternary structure, heterodimer of HisH and HisF.

It localises to the cytoplasm. The catalysed reaction is 5-[(5-phospho-1-deoxy-D-ribulos-1-ylimino)methylamino]-1-(5-phospho-beta-D-ribosyl)imidazole-4-carboxamide + L-glutamine = D-erythro-1-(imidazol-4-yl)glycerol 3-phosphate + 5-amino-1-(5-phospho-beta-D-ribosyl)imidazole-4-carboxamide + L-glutamate + H(+). It catalyses the reaction L-glutamine + H2O = L-glutamate + NH4(+). It functions in the pathway amino-acid biosynthesis; L-histidine biosynthesis; L-histidine from 5-phospho-alpha-D-ribose 1-diphosphate: step 5/9. In terms of biological role, IGPS catalyzes the conversion of PRFAR and glutamine to IGP, AICAR and glutamate. The HisH subunit catalyzes the hydrolysis of glutamine to glutamate and ammonia as part of the synthesis of IGP and AICAR. The resulting ammonia molecule is channeled to the active site of HisF. The protein is Imidazole glycerol phosphate synthase subunit HisH of Prochlorococcus marinus (strain SARG / CCMP1375 / SS120).